The sequence spans 314 residues: Small ribosomal subunit protein RACK1 (314 aa).

Threonine 10 is subject to Phosphothreonine. The WD 1 repeat unit spans residues 13 to 44 (GHSGWVTSLSTAPENPDILLSGSRDKSIILWN). Serine 39 is subject to Phosphoserine. Tyrosine 52 carries the phosphotyrosine modification. WD repeat units lie at residues 61–91 (GHSH…RLWD), 103–133 (GHTS…KIWN), 146–178 (GHSD…KVWD), 190–220 (GHTG…MLWD), 231–260 (EAKA…RIFD), and 281–311 (SSEP…RVWQ). Serine 148 is subject to Phosphoserine. Phosphoserine is present on residues serine 242 and serine 255.

The protein belongs to the WD repeat G protein beta family. Ribosomal protein RACK1 subfamily. As to quaternary structure, component of the small ribosomal subunit (SSU). Mature yeast ribosomes consist of a small (40S) and a large (60S) subunit. The 40S small subunit contains 1 molecule of ribosomal RNA (18S rRNA) and at least 33 different proteins. The large 60S subunit contains 3 rRNA molecules (25S, 5.8S and 5S rRNA) and at least 46 different proteins. RACK1 is located at the head of the SSU in the vicinity of the mRNA exit channel. RACK1 interacts with the mRNA-binding protein SCP16. RACK1 also exists simultaneously as a homodimer in a cytosolic non-ribosome-bound form. Interacts with pck2. Interacts with pat1/ran1.

The protein resides in the cytoplasm. Its subcellular location is the membrane. In terms of biological role, component of the ribosome, a large ribonucleoprotein complex responsible for the synthesis of proteins in the cell. The small ribosomal subunit (SSU) binds messenger RNAs (mRNAs) and translates the encoded message by selecting cognate aminoacyl-transfer RNA (tRNA) molecules. The large subunit (LSU) contains the ribosomal catalytic site termed the peptidyl transferase center (PTC), which catalyzes the formation of peptide bonds, thereby polymerizing the amino acids delivered by tRNAs into a polypeptide chain. The nascent polypeptides leave the ribosome through a tunnel in the LSU and interact with protein factors that function in enzymatic processing, targeting, and the membrane insertion of nascent chains at the exit of the ribosomal tunnel. Located at the head of the 40S ribosomal subunit in the vicinity of the mRNA exit channel, RACK1 serves as a scaffold protein that can recruit other proteins to the ribosome. Involved in induction of the ribosome quality control (RQC) pathway; a pathway that degrades nascent peptide chains during problematic translation. Involved in the negative regulation of translation of a specific subset of proteins. May be a receptor for protein kinase C in the regulation of actin cytoskeleton organization during cell wall synthesis and morphogenesis. Involved in the control of G2/M transition. May function as an anchoring protein for pat1/ran1 kinase. Negatively regulates the cell integrity transduction pathway by favoring translation of the tyrosine-phosphatases pyp1 and pyp2 that deactivate pmk1. Positively regulates the synthesis of the stress-responsive transcription factor Atf1 and the cytoplasmic catalase, a detoxificant enzyme induced by treatment with hydrogen peroxide. The chain is Small ribosomal subunit protein RACK1 from Schizosaccharomyces pombe (strain 972 / ATCC 24843) (Fission yeast).